Consider the following 62-residue polypeptide: Protein DsrB (62 aa).

It belongs to the DsrB family.

The protein is Protein DsrB of Shigella boydii serotype 18 (strain CDC 3083-94 / BS512).